The sequence spans 206 residues: Probable thymidylate kinase (206 aa).

10-17 (GIDGSGKS) provides a ligand contact to ATP.

Belongs to the thymidylate kinase family.

The enzyme catalyses dTMP + ATP = dTDP + ADP. This chain is Probable thymidylate kinase, found in Methanosarcina acetivorans (strain ATCC 35395 / DSM 2834 / JCM 12185 / C2A).